Here is a 296-residue protein sequence, read N- to C-terminus: tRNA dimethylallyltransferase (296 aa).

Position 2 to 9 (2 to 9 (GPTASGKT)) interacts with ATP. 4–9 (TASGKT) is a substrate binding site. 3 interaction with substrate tRNA regions span residues 27-30 (DSAL), 151-155 (QRLSR), and 232-237 (RCVGYR).

This sequence belongs to the IPP transferase family. Monomer. It depends on Mg(2+) as a cofactor.

It catalyses the reaction adenosine(37) in tRNA + dimethylallyl diphosphate = N(6)-dimethylallyladenosine(37) in tRNA + diphosphate. Catalyzes the transfer of a dimethylallyl group onto the adenine at position 37 in tRNAs that read codons beginning with uridine, leading to the formation of N6-(dimethylallyl)adenosine (i(6)A). In Shewanella baltica (strain OS155 / ATCC BAA-1091), this protein is tRNA dimethylallyltransferase.